The chain runs to 126 residues: Probable S-adenosyl-L-methionine-binding protein MJ1583 (126 aa).

A TsaA-like domain is found at 4–126 (LKPIGVVEQN…FSEKLDCPKI (123 aa)). S-adenosyl-L-methionine is bound by residues 45-46 (HK), R75, and 106-109 (YNET).

This sequence belongs to the tRNA methyltransferase O family.

The polypeptide is Probable S-adenosyl-L-methionine-binding protein MJ1583 (Methanocaldococcus jannaschii (strain ATCC 43067 / DSM 2661 / JAL-1 / JCM 10045 / NBRC 100440) (Methanococcus jannaschii)).